Consider the following 464-residue polypeptide: tRNA-2-methylthio-N(6)-dimethylallyladenosine synthase (464 aa).

In terms of domain architecture, MTTase N-terminal spans 19-135 (GSYWITTFGC…LENLLGKVDL (117 aa)). Residues Cys-28, Cys-64, Cys-98, Cys-170, Cys-174, and Cys-177 each coordinate [4Fe-4S] cluster. Residues 156–393 (RESSICGWVN…NELVETTSKQ (238 aa)) enclose the Radical SAM core domain. The region spanning 396–464 (ERYLDSIESV…PFSLTGILCL (69 aa)) is the TRAM domain.

It belongs to the methylthiotransferase family. MiaB subfamily. In terms of assembly, monomer. Requires [4Fe-4S] cluster as cofactor.

The protein resides in the cytoplasm. The catalysed reaction is N(6)-dimethylallyladenosine(37) in tRNA + (sulfur carrier)-SH + AH2 + 2 S-adenosyl-L-methionine = 2-methylsulfanyl-N(6)-dimethylallyladenosine(37) in tRNA + (sulfur carrier)-H + 5'-deoxyadenosine + L-methionine + A + S-adenosyl-L-homocysteine + 2 H(+). Catalyzes the methylthiolation of N6-(dimethylallyl)adenosine (i(6)A), leading to the formation of 2-methylthio-N6-(dimethylallyl)adenosine (ms(2)i(6)A) at position 37 in tRNAs that read codons beginning with uridine. This Prochlorococcus marinus (strain MIT 9215) protein is tRNA-2-methylthio-N(6)-dimethylallyladenosine synthase.